A 349-amino-acid polypeptide reads, in one-letter code: tRNA pseudouridine synthase D (349 aa).

Phe-27 is a binding site for substrate. Asp-80 serves as the catalytic Nucleophile. Residue Asn-129 participates in substrate binding. Positions 155–303 (GVPNYFGAQR…VEAARRAMLL (149 aa)) constitute a TRUD domain. Phe-329 contacts substrate.

The protein belongs to the pseudouridine synthase TruD family.

The enzyme catalyses uridine(13) in tRNA = pseudouridine(13) in tRNA. Responsible for synthesis of pseudouridine from uracil-13 in transfer RNAs. The chain is tRNA pseudouridine synthase D from Escherichia coli O6:K15:H31 (strain 536 / UPEC).